Reading from the N-terminus, the 165-residue chain is Small ribosomal subunit protein uS17m (165 aa).

This sequence belongs to the universal ribosomal protein uS17 family. Component of the mitochondrial small ribosomal subunit (mt-SSU). Mature N.crassa 74S mitochondrial ribosomes consist of a small (37S) and a large (54S) subunit. The 37S small subunit contains a 16S ribosomal RNA (16S mt-rRNA) and 32 different proteins. The 54S large subunit contains a 23S rRNA (23S mt-rRNA) and 42 different proteins. uS17m interacts with the F(1)-ATPase inhibitor IF(1) dimer.

The protein localises to the mitochondrion. Functionally, component of the mitochondrial ribosome (mitoribosome), a dedicated translation machinery responsible for the synthesis of mitochondrial genome-encoded proteins, including at least some of the essential transmembrane subunits of the mitochondrial respiratory chain. The mitoribosomes are attached to the mitochondrial inner membrane and translation products are cotranslationally integrated into the membrane. This chain is Small ribosomal subunit protein uS17m (mrps17), found in Neurospora crassa (strain ATCC 24698 / 74-OR23-1A / CBS 708.71 / DSM 1257 / FGSC 987).